The following is a 564-amino-acid chain: Rhotekin (564 aa).

Arg14 carries the post-translational modification Omega-N-methylarginine. The 82-residue stretch at 17-98 folds into the REM-1 domain; the sequence is ALEMEFKRGR…LQRRKEAQVL (82 aa). Residues Ser30 and Ser106 each carry the phosphoserine modification. Position 230 is an asymmetric dimethylarginine (Arg230). Ser232 bears the Phosphoserine mark. The PH domain occupies 309–416; sequence QPTASGALRV…WMEALWQLFF (108 aa). Residues 518–564 are disordered; sequence TFSLDAAPADHSLGPSRSVAPLPPQRSPKSRGFYSKSQLGPWLQSPV. A phosphoserine mark is found at Ser520, Ser529, and Ser544.

In terms of assembly, interacts via its C-terminal region with the TAX1BP3 PDZ domain. This interaction facilitates Rho-mediated activation of the c-Fos serum response element (SRE). Interacts with SEPT9. Specifically binds to GTP-bound RHOA, RHOB and RHOC and inhibits their GTPase activity. Abundantly expressed in brain and kidney. Weakly expressed in lung, testis, skeletal muscle, heart and thymus.

Functionally, mediates Rho signaling to activate NF-kappa-B and may confer increased resistance to apoptosis to cells in gastric tumorigenesis. May play a novel role in the organization of septin structures. The sequence is that of Rhotekin from Mus musculus (Mouse).